We begin with the raw amino-acid sequence, 558 residues long: Glutamine--tRNA ligase (558 aa).

The 'HIGH' region signature appears at 34–44 (PEPNGYLHIGH). ATP-binding positions include 35–37 (EPN) and 41–47 (HIGHAKS). L-glutamine is bound by residues Asp-67 and Tyr-212. ATP contacts are provided by residues Thr-231, 261–262 (RL), and 269–271 (LSK). The short motif at 268 to 272 (VLSKR) is the 'KMSKS' region element.

This sequence belongs to the class-I aminoacyl-tRNA synthetase family. In terms of assembly, monomer.

It localises to the cytoplasm. It carries out the reaction tRNA(Gln) + L-glutamine + ATP = L-glutaminyl-tRNA(Gln) + AMP + diphosphate. The polypeptide is Glutamine--tRNA ligase (Pseudoalteromonas atlantica (strain T6c / ATCC BAA-1087)).